The chain runs to 138 residues: Bis(5'-nucleosyl)-tetraphosphatase [asymmetrical] (138 aa).

A Nudix hydrolase domain is found at 1–132; it reads MVVKAAGLVI…EMGSLLRKFS (132 aa). The Nudix box motif lies at 37–58; that stretch reads GHVDPGEDEWQAAIRETKEEAN.

This sequence belongs to the Nudix hydrolase family. Monomer. It depends on Mg(2+) as a cofactor. Requires Co(2+) as cofactor. Mn(2+) serves as cofactor. The cofactor is Zn(2+). Ca(2+) is required as a cofactor.

The catalysed reaction is P(1),P(4)-bis(5'-adenosyl) tetraphosphate + H2O = AMP + ATP + 2 H(+). Functionally, asymmetrically hydrolyzes Ap4A to yield AMP and ATP. The chain is Bis(5'-nucleosyl)-tetraphosphatase [asymmetrical] (ndx-4) from Caenorhabditis elegans.